The chain runs to 65 residues: Beta-defensin 17 (65 aa).

The signal sequence occupies residues 1 to 19 (MKFHLLFFILLFSITILTG). Cystine bridges form between C35-C63, C42-C56, and C46-C64.

Belongs to the beta-defensin family.

The protein resides in the secreted. Functionally, has antibacterial activity. This chain is Beta-defensin 17 (Defb17), found in Rattus norvegicus (Rat).